A 241-amino-acid polypeptide reads, in one-letter code: uncharacterized protein (241 aa).

Residues 78-80 (TSA), Gly111, Ile131, and 138-140 (SSL) contribute to the S-adenosyl-L-methionine site.

This sequence belongs to the class IV-like SAM-binding methyltransferase superfamily. RNA methyltransferase TrmH family.

This is an uncharacterized protein from Haemophilus influenzae (strain ATCC 51907 / DSM 11121 / KW20 / Rd).